The sequence spans 189 residues: Chitin synthase 2 (189 aa).

This sequence belongs to the chitin synthase family. Class II subfamily.

Its subcellular location is the cell membrane. It carries out the reaction [(1-&gt;4)-N-acetyl-beta-D-glucosaminyl](n) + UDP-N-acetyl-alpha-D-glucosamine = [(1-&gt;4)-N-acetyl-beta-D-glucosaminyl](n+1) + UDP + H(+). Its function is as follows. Polymerizes chitin, a structural polymer of the cell wall and septum, by transferring the sugar moiety of UDP-GlcNAc to the non-reducing end of the growing chitin polymer. The protein is Chitin synthase 2 (CHS2) of Exophiala exophialae (Black yeast-like fungus).